A 323-amino-acid polypeptide reads, in one-letter code: Ubiquinone biosynthesis protein COQ4, mitochondrial (323 aa).

Positions 205, 206, 209, and 221 each coordinate Zn(2+).

It belongs to the COQ4 family. Component of a multi-subunit COQ enzyme complex, composed of at least COQ3, COQ4, COQ5, COQ6, COQ7 and COQ9. It depends on Zn(2+) as a cofactor.

The protein resides in the mitochondrion inner membrane. The enzyme catalyses a 4-hydroxy-3-methoxy-5-(all-trans-polyprenyl)benzoate + H(+) = a 2-methoxy-6-(all-trans-polyprenyl)phenol + CO2. Its pathway is cofactor biosynthesis; ubiquinone biosynthesis. Functionally, lyase that catalyzes the C1-decarboxylation of 4-hydroxy-3-methoxy-5-(all-trans-polyprenyl)benzoic acid into 2-methoxy-6-(all-trans-polyprenyl)phenol during ubiquinone biosynthesis. The chain is Ubiquinone biosynthesis protein COQ4, mitochondrial from Candida albicans (strain SC5314 / ATCC MYA-2876) (Yeast).